The sequence spans 597 residues: 2-isopropylmalate synthase (597 aa).

A unknown region spans residues Met-1 to Glu-80. The region spanning Val-87–Val-349 is the Pyruvate carboxyltransferase domain. Residues Val-87–Val-349 are 2-isopropylmalate synthase. Residues Asp-96, His-284, His-286, and Asn-320 each contribute to the Mn(2+) site. The tract at residues Lys-475–Ile-597 is regulatory domain.

The protein belongs to the alpha-IPM synthase/homocitrate synthase family. LeuA type 1 subfamily. In terms of assembly, homodimer. Mn(2+) is required as a cofactor.

The protein localises to the cytoplasm. It catalyses the reaction 3-methyl-2-oxobutanoate + acetyl-CoA + H2O = (2S)-2-isopropylmalate + CoA + H(+). It participates in amino-acid biosynthesis; L-leucine biosynthesis; L-leucine from 3-methyl-2-oxobutanoate: step 1/4. Its function is as follows. Catalyzes the condensation of the acetyl group of acetyl-CoA with 3-methyl-2-oxobutanoate (2-ketoisovalerate) to form 3-carboxy-3-hydroxy-4-methylpentanoate (2-isopropylmalate). The protein is 2-isopropylmalate synthase of Neisseria gonorrhoeae (strain ATCC 700825 / FA 1090).